We begin with the raw amino-acid sequence, 321 residues long: L-carnitine dehydrogenase (321 aa).

7–12 (GTGVIG) lines the NAD(+) pocket.

This sequence belongs to the 3-hydroxyacyl-CoA dehydrogenase family. L-carnitine dehydrogenase subfamily. As to quaternary structure, homodimer.

It is found in the cytoplasm. The enzyme catalyses carnitine + NAD(+) = 3-dehydrocarnitine + NADH + H(+). It participates in amine and polyamine metabolism; carnitine metabolism. In terms of biological role, catalyzes the NAD(+)-dependent oxidation of L-carnitine to 3-dehydrocarnitine. The chain is L-carnitine dehydrogenase from Staphylococcus epidermidis (strain ATCC 12228 / FDA PCI 1200).